The following is a 128-amino-acid chain: L-ectoine synthase (128 aa).

It belongs to the ectoine synthase family.

The catalysed reaction is (2S)-4-acetamido-2-aminobutanoate = L-ectoine + H2O. The protein operates within amine and polyamine biosynthesis; ectoine biosynthesis; L-ectoine from L-aspartate 4-semialdehyde: step 3/3. Catalyzes the circularization of gamma-N-acetyl-alpha,gamma-diaminobutyric acid (ADABA) to ectoine (1,4,5,6-tetrahydro-2-methyl-4-pyrimidine carboxylic acid), which is an excellent osmoprotectant. This is L-ectoine synthase from Vibrio atlanticus (strain LGP32) (Vibrio splendidus (strain Mel32)).